The primary structure comprises 297 residues: Protoheme IX farnesyltransferase 1 (297 aa).

A run of 9 helical transmembrane segments spans residues 23–43 (VVVL…RAGV), 45–65 (WSVL…AAVV), 93–113 (LPAL…LLVF), 117–137 (LTAW…TGFL), 145–165 (IVIG…AVSG), 171–191 (PLLL…ALAI), 216–236 (LHIL…YAIH), 241–261 (LYLV…WVLY), and 277–297 (IGYL…LLNL).

The protein belongs to the UbiA prenyltransferase family. Protoheme IX farnesyltransferase subfamily.

It localises to the cell inner membrane. It carries out the reaction heme b + (2E,6E)-farnesyl diphosphate + H2O = Fe(II)-heme o + diphosphate. It functions in the pathway porphyrin-containing compound metabolism; heme O biosynthesis; heme O from protoheme: step 1/1. Functionally, converts heme B (protoheme IX) to heme O by substitution of the vinyl group on carbon 2 of heme B porphyrin ring with a hydroxyethyl farnesyl side group. The polypeptide is Protoheme IX farnesyltransferase 1 (Pseudomonas putida (strain ATCC 47054 / DSM 6125 / CFBP 8728 / NCIMB 11950 / KT2440)).